The chain runs to 203 residues: Enterotoxin-like toxin X (203 aa).

The interval tyrosine 164–glutamate 180 is sialic acid-binding motif.

The protein belongs to the staphylococcal/streptococcal toxin family.

The protein resides in the secreted. In terms of biological role, plays a role in the inhibition of the host innate immune system. Inhibits phagocytosis and killing by human neutrophils by interacting with multiple neutrophil surface glycoproteins in a sialic acid-dependent manner. This Staphylococcus aureus protein is Enterotoxin-like toxin X.